We begin with the raw amino-acid sequence, 747 residues long: Tegument protein UL46 homolog (747 aa).

4 disordered regions span residues 437 to 484 (FCCP…SPRT), 525 to 593 (QRSD…DYMR), 611 to 665 (TPYM…PEVV), and 689 to 747 (SASR…VSSL). Polar residues predominate over residues 465-484 (LRSSRQLPTSPPSNIVSPRT). Residues 528–540 (DSSSSDNSTCSST) are compositionally biased toward low complexity. Residues 541–553 (ETQYITLPSTPSP) are compositionally biased toward polar residues. 2 stretches are compositionally biased toward basic and acidic residues: residues 707–724 (VCRERDEESAEPRHDGFI) and 736–747 (KHPDQTERVSSL).

Belongs to the herpesviridae HHV-1 VP11/12 protein family.

Its subcellular location is the virion tegument. It is found in the host cell membrane. In terms of biological role, modulates alpha trans-inducing factor-dependent activation of alpha genes. The chain is Tegument protein UL46 homolog from Equine herpesvirus 1 (strain Ab4p) (EHV-1).